Consider the following 129-residue polypeptide: Small ribosomal subunit protein uS11 (129 aa).

The protein belongs to the universal ribosomal protein uS11 family. Part of the 30S ribosomal subunit. Interacts with proteins S7 and S18. Binds to IF-3.

In terms of biological role, located on the platform of the 30S subunit, it bridges several disparate RNA helices of the 16S rRNA. Forms part of the Shine-Dalgarno cleft in the 70S ribosome. This chain is Small ribosomal subunit protein uS11, found in Rhizobium etli (strain CIAT 652).